Consider the following 341-residue polypeptide: ATP-dependent 6-phosphofructokinase 2 (341 aa).

ATP is bound by residues G10, 72 to 73, and 102 to 105; these read RL and GEGT. E103 serves as a coordination point for Mg(2+). Substrate-binding positions include 125–127, R162, 169–171, E222, K266, and 272–275; these read TID, MGR, and HVQR. D127 acts as the Proton acceptor in catalysis.

The protein belongs to the phosphofructokinase type A (PFKA) family. Mixed-substrate PFK group III subfamily. Homodimer or homotetramer. Mg(2+) serves as cofactor.

The protein resides in the cytoplasm. It carries out the reaction beta-D-fructose 6-phosphate + ATP = beta-D-fructose 1,6-bisphosphate + ADP + H(+). It functions in the pathway carbohydrate degradation; glycolysis; D-glyceraldehyde 3-phosphate and glycerone phosphate from D-glucose: step 3/4. Its activity is regulated as follows. Allosterically inhibited by phosphoenolpyruvate. Its function is as follows. Catalyzes the phosphorylation of D-fructose 6-phosphate to fructose 1,6-bisphosphate by ATP, the first committing step of glycolysis. This chain is ATP-dependent 6-phosphofructokinase 2, found in Streptomyces coelicolor (strain ATCC BAA-471 / A3(2) / M145).